The chain runs to 394 residues: NAD(P)H-quinone oxidoreductase subunit H (394 aa).

This sequence belongs to the complex I 49 kDa subunit family. In terms of assembly, NDH-1 can be composed of about 15 different subunits; different subcomplexes with different compositions have been identified which probably have different functions.

The protein resides in the cellular thylakoid membrane. The catalysed reaction is a plastoquinone + NADH + (n+1) H(+)(in) = a plastoquinol + NAD(+) + n H(+)(out). It carries out the reaction a plastoquinone + NADPH + (n+1) H(+)(in) = a plastoquinol + NADP(+) + n H(+)(out). Its function is as follows. NDH-1 shuttles electrons from an unknown electron donor, via FMN and iron-sulfur (Fe-S) centers, to quinones in the respiratory and/or the photosynthetic chain. The immediate electron acceptor for the enzyme in this species is believed to be plastoquinone. Couples the redox reaction to proton translocation, and thus conserves the redox energy in a proton gradient. Cyanobacterial NDH-1 also plays a role in inorganic carbon-concentration. The polypeptide is NAD(P)H-quinone oxidoreductase subunit H (Prochlorococcus marinus (strain MIT 9303)).